The primary structure comprises 239 residues: Pyridoxine 5'-phosphate synthase (239 aa).

Asn7 is a binding site for 3-amino-2-oxopropyl phosphate. A 1-deoxy-D-xylulose 5-phosphate-binding site is contributed by Asp9 to His10. Position 18 (Arg18) interacts with 3-amino-2-oxopropyl phosphate. Residue His43 is the Proton acceptor of the active site. Residues Arg45 and His50 each contribute to the 1-deoxy-D-xylulose 5-phosphate site. Residue Glu70 is the Proton acceptor of the active site. Thr100 lines the 1-deoxy-D-xylulose 5-phosphate pocket. The Proton donor role is filled by His191. Residues Gly192 and Gly213 to His214 each bind 3-amino-2-oxopropyl phosphate.

The protein belongs to the PNP synthase family. In terms of assembly, homooctamer; tetramer of dimers.

Its subcellular location is the cytoplasm. It catalyses the reaction 3-amino-2-oxopropyl phosphate + 1-deoxy-D-xylulose 5-phosphate = pyridoxine 5'-phosphate + phosphate + 2 H2O + H(+). Its pathway is cofactor biosynthesis; pyridoxine 5'-phosphate biosynthesis; pyridoxine 5'-phosphate from D-erythrose 4-phosphate: step 5/5. In terms of biological role, catalyzes the complicated ring closure reaction between the two acyclic compounds 1-deoxy-D-xylulose-5-phosphate (DXP) and 3-amino-2-oxopropyl phosphate (1-amino-acetone-3-phosphate or AAP) to form pyridoxine 5'-phosphate (PNP) and inorganic phosphate. The protein is Pyridoxine 5'-phosphate synthase of Desulforapulum autotrophicum (strain ATCC 43914 / DSM 3382 / VKM B-1955 / HRM2) (Desulfobacterium autotrophicum).